Consider the following 292-residue polypeptide: Protease HtpX homolog (292 aa).

2 helical membrane-spanning segments follow: residues 4 to 24 and 38 to 58; these read IALFLLTNVAVVVVLGIVASL and LGALLGFAFIMGFGGAIISLL. His144 is a binding site for Zn(2+). Residue Glu145 is part of the active site. His148 contributes to the Zn(2+) binding site. Transmembrane regions (helical) follow at residues 152 to 172 and 199 to 219; these read GDMVTMALIQGVMNTFVVFLS and ITTIVLDIVLGFLAAIIVAWF. Glu224 provides a ligand contact to Zn(2+).

It belongs to the peptidase M48B family. Zn(2+) is required as a cofactor.

It localises to the cell inner membrane. The chain is Protease HtpX homolog from Acidovorax ebreus (strain TPSY) (Diaphorobacter sp. (strain TPSY)).